Reading from the N-terminus, the 179-residue chain is Small heat shock protein hspK (179 aa).

A sHSP domain is found at His-32–Lys-178. A disordered region spans residues Lys-80–Ala-122. Over residues Asn-87–Thr-114 the composition is skewed to low complexity.

This sequence belongs to the small heat shock protein (HSP20) family.

The polypeptide is Small heat shock protein hspK (hspK) (Dictyostelium discoideum (Social amoeba)).